A 426-amino-acid polypeptide reads, in one-letter code: Enolase (426 aa).

Gln163 contacts (2R)-2-phosphoglycerate. The active-site Proton donor is the Glu205. Mg(2+) contacts are provided by Asp242, Glu283, and Asp310. Lys335, Arg364, Ser365, and Lys386 together coordinate (2R)-2-phosphoglycerate. Catalysis depends on Lys335, which acts as the Proton acceptor.

The protein belongs to the enolase family. Mg(2+) is required as a cofactor.

Its subcellular location is the cytoplasm. The protein localises to the secreted. It is found in the cell surface. The catalysed reaction is (2R)-2-phosphoglycerate = phosphoenolpyruvate + H2O. Its pathway is carbohydrate degradation; glycolysis; pyruvate from D-glyceraldehyde 3-phosphate: step 4/5. In terms of biological role, catalyzes the reversible conversion of 2-phosphoglycerate (2-PG) into phosphoenolpyruvate (PEP). It is essential for the degradation of carbohydrates via glycolysis. The protein is Enolase of Leifsonia xyli subsp. xyli (strain CTCB07).